The following is a 344-amino-acid chain: Ribosomal RNA large subunit methyltransferase Cfr (344 aa).

The active-site Proton acceptor is E90. Positions 97–330 constitute a Radical SAM core domain; it reads KQGWESFCIS…ATVRTQFGSE (234 aa). C104 and C335 are oxidised to a cystine. Residues C111, C115, and C118 each coordinate [4Fe-4S] cluster. S-adenosyl-L-methionine is bound by residues 157–158, S188, 211–213, and N292; these read GE and SLH. The S-methylcysteine intermediate role is filled by C335.

This sequence belongs to the radical SAM superfamily. RlmN family. Cfr subfamily. The cofactor is [4Fe-4S] cluster.

The protein resides in the cytoplasm. The enzyme catalyses adenosine(2503) in 23S rRNA + 2 reduced [2Fe-2S]-[ferredoxin] + 2 S-adenosyl-L-methionine = 8-methyladenosine(2503) in 23S rRNA + 5'-deoxyadenosine + L-methionine + 2 oxidized [2Fe-2S]-[ferredoxin] + S-adenosyl-L-homocysteine. In terms of biological role, specifically methylates position 8 of adenine 2503 in 23S rRNA. Confers resistance to some classes of antibiotics. The chain is Ribosomal RNA large subunit methyltransferase Cfr from Clostridium botulinum (strain Langeland / NCTC 10281 / Type F).